Here is a 64-residue protein sequence, read N- to C-terminus: Small ribosomal subunit protein bS21 (64 aa).

This sequence belongs to the bacterial ribosomal protein bS21 family.

The protein is Small ribosomal subunit protein bS21 of Amoebophilus asiaticus (strain 5a2).